A 488-amino-acid chain; its full sequence is Poly(3-hydroxybutyrate) depolymerase (488 aa).

An N-terminal signal peptide occupies residues 1–27; that stretch reads MVRRLWRRIAGWLAACVAILCAFPLHA. Serine 166 serves as the catalytic Charge relay system. A Fibronectin type-III domain is found at 346–428; it reads APTGLAVTAT…AAVSATTKSA (83 aa).

This sequence belongs to the AB hydrolase superfamily. Lipase family.

The protein localises to the secreted. It carries out the reaction [(3R)-hydroxybutanoate](n) + H2O = [(3R)-hydroxybutanoate](n-2) + (3R)-hydroxybutanoate dimer + H(+). The catalysed reaction is [(3R)-hydroxybutanoate](n) + H2O = [(3R)-hydroxybutanoate](n-3) + (3R)-hydroxybutanoate trimer + H(+). It catalyses the reaction [(3R)-hydroxybutanoate](n) + H2O = [(3R)-hydroxybutanoate](n-1) + (R)-3-hydroxybutanoate + H(+). The enzyme catalyses [(3R)-hydroxybutanoate](n) + H2O = [(3R)-hydroxybutanoate](n-5) + (3R)-hydroxybutanoate pentamer + H(+). It carries out the reaction [(3R)-hydroxybutanoate](n) + H2O = [(3R)-hydroxybutanoate](n-4) + (3R)-hydroxybutanoate tetramer + H(+). Its function is as follows. This protein degrades water-insoluble and water-soluble PHB to monomeric D(-)-3-hydroxybutyrate. This chain is Poly(3-hydroxybutyrate) depolymerase, found in Ralstonia pickettii (Burkholderia pickettii).